The primary structure comprises 99 residues: Malonate decarboxylase acyl carrier protein (99 aa).

The residue at position 25 (serine 25) is an O-(phosphoribosyl dephospho-coenzyme A)serine.

The protein belongs to the MdcC family. Post-translationally, covalently binds the prosthetic group of malonate decarboxylase.

It localises to the cytoplasm. In terms of biological role, subunit of malonate decarboxylase, it is an acyl carrier protein to which acetyl and malonyl thioester residues are bound via a 2'-(5''-phosphoribosyl)-3'-dephospho-CoA prosthetic group and turn over during the catalytic mechanism. This chain is Malonate decarboxylase acyl carrier protein, found in Pseudomonas syringae pv. syringae (strain B728a).